A 174-amino-acid polypeptide reads, in one-letter code: B3 domain-containing protein At2g31862 (174 aa).

Positions 1 to 71 (MWVNLSCMCH…KLYIALVPLD (71 aa)) form a DNA-binding region, TF-B3.

The protein localises to the nucleus. The chain is B3 domain-containing protein At2g31862 from Arabidopsis thaliana (Mouse-ear cress).